The chain runs to 232 residues: Chaperone protein CssC (232 aa).

An N-terminal signal peptide occupies residues 1 to 20 (MKSKLIILLMLVPFSSFSTE).

It belongs to the periplasmic pilus chaperone family.

It localises to the periplasm. Functionally, involved in the biogenesis of the CS6 fimbria. In Escherichia coli, this protein is Chaperone protein CssC (cssC).